The primary structure comprises 62 residues: Paralithocin 1 (62 aa).

Positions 1–23 (MGPMKVLLVLLVVMVAAPHIADA) are cleaved as a signal peptide. 4 disulfides stabilise this stretch: Cys29/Cys55, Cys33/Cys51, Cys37/Cys49, and Cys42/Cys52. The residue at position 61 (Tyr61) is a Tyrosine amide; partial.

The protein belongs to the paralithocin family. Post-translationally, the amidated form is probably the active form.

Functionally, has weak antibacterial activity, mainly against marine Gram-positive bacteria like C.maltaromaticum (MIC=200 uM), C.mobile (MIC=100 uM), C.divergens (MIC=200 uM) and C.funditum (MIC=200 uM) but also against C.glutamicum (MIC=50 uM). Has very little or no activity against Gram-negative bacteria. The sequence is that of Paralithocin 1 from Paralithodes camtschaticus (Red king crab).